The following is a 221-amino-acid chain: Translation initiation factor 6 (221 aa).

This sequence belongs to the eIF-6 family.

Functionally, binds to the 50S ribosomal subunit and prevents its association with the 30S ribosomal subunit to form the 70S initiation complex. The polypeptide is Translation initiation factor 6 (Methanopyrus kandleri (strain AV19 / DSM 6324 / JCM 9639 / NBRC 100938)).